A 294-amino-acid chain; its full sequence is tRNA dimethylallyltransferase (294 aa).

9–16 (GATATGKS) provides a ligand contact to ATP. 11–16 (TATGKS) serves as a coordination point for substrate. The interval 34 to 37 (DSRQ) is interaction with substrate tRNA.

The protein belongs to the IPP transferase family. Monomer. Requires Mg(2+) as cofactor.

The catalysed reaction is adenosine(37) in tRNA + dimethylallyl diphosphate = N(6)-dimethylallyladenosine(37) in tRNA + diphosphate. In terms of biological role, catalyzes the transfer of a dimethylallyl group onto the adenine at position 37 in tRNAs that read codons beginning with uridine, leading to the formation of N6-(dimethylallyl)adenosine (i(6)A). This Trichormus variabilis (strain ATCC 29413 / PCC 7937) (Anabaena variabilis) protein is tRNA dimethylallyltransferase.